The sequence spans 256 residues: Isoprenyl transferase (256 aa).

Aspartate 33 is a catalytic residue. Position 33 (aspartate 33) interacts with Mg(2+). Substrate is bound by residues 34-37 (GNGR), tryptophan 38, arginine 46, histidine 50, and 78-80 (STE). The active-site Proton acceptor is the asparagine 81. Substrate is bound by residues tryptophan 82, arginine 84, arginine 201, and 207–209 (RIS). Glutamate 220 is a Mg(2+) binding site.

It belongs to the UPP synthase family. In terms of assembly, homodimer. Mg(2+) serves as cofactor.

Functionally, catalyzes the condensation of isopentenyl diphosphate (IPP) with allylic pyrophosphates generating different type of terpenoids. This Staphylococcus aureus (strain COL) protein is Isoprenyl transferase.